The following is a 924-amino-acid chain: DNA repair and recombination protein RDH54 (924 aa).

The segment covering 1–10 (MQIPKYENKP) has biased composition (basic and acidic residues). Disordered stretches follow at residues 1 to 21 (MQIPKYENKPFKPPRRVGSNK) and 155 to 183 (EALSQNMGNPSPPTTSTTETVPSTKNDGG). A compositionally biased stretch (low complexity) spans 168–178 (TTSTTETVPST). The Helicase ATP-binding domain occupies 299–487 (LENDSDISGC…FTIIDFINPG (189 aa)). 346-353 (IPLTGLCK) lines the ATP pocket. The DEGH box signature appears at 472–475 (NDLN). Lys-615 participates in a covalent cross-link: Glycyl lysine isopeptide (Lys-Gly) (interchain with G-Cter in ubiquitin). Residues 631–790 (KLKVLMTLLE…DSEMRNKESS (160 aa)) form the Helicase C-terminal domain.

This sequence belongs to the SNF2/RAD54 helicase family. As to quaternary structure, interacts with RAD51 and DMC1.

Its subcellular location is the nucleus. It catalyses the reaction ATP + H2O = ADP + phosphate + H(+). Functionally, involved in the recombinational repair of double-strand breaks (DSB) in DNA during mitosis and meiosis. Has DNA dependent ATPase activity. Promotes D-loop (displacement loop) formation with RAD51 recombinase. Modifies the topology of double-stranded DNA during the D-loop reaction to facilitate the invasion of the homologous duplex molecule by the initiating single-stranded DNA substrate. Required for adaptation from G2/M checkpoint arrest induced by a double strand break, by participating in monitoring the extent of single-stranded DNA produced by resection of DNA ends. This role is distinct from its roles in recombination. Promotes colocalization of RAD51 and DMC1 during meiotic recombination. Involved in crossover interference. The polypeptide is DNA repair and recombination protein RDH54 (RDH54) (Saccharomyces cerevisiae (strain JAY291) (Baker's yeast)).